The primary structure comprises 209 residues: Uracil phosphoribosyltransferase (209 aa).

5-phospho-alpha-D-ribose 1-diphosphate is bound by residues R79, R104, and 131–139; that span reads DPMLATGGS. Uracil-binding positions include I194 and 199-201; that span reads GDA. D200 contributes to the 5-phospho-alpha-D-ribose 1-diphosphate binding site.

This sequence belongs to the UPRTase family. It depends on Mg(2+) as a cofactor.

It carries out the reaction UMP + diphosphate = 5-phospho-alpha-D-ribose 1-diphosphate + uracil. Its pathway is pyrimidine metabolism; UMP biosynthesis via salvage pathway; UMP from uracil: step 1/1. Its activity is regulated as follows. Allosterically activated by GTP. In terms of biological role, catalyzes the conversion of uracil and 5-phospho-alpha-D-ribose 1-diphosphate (PRPP) to UMP and diphosphate. The chain is Uracil phosphoribosyltransferase from Streptococcus thermophilus (strain CNRZ 1066).